We begin with the raw amino-acid sequence, 239 residues long: Ribonuclease PH (239 aa).

Phosphate contacts are provided by residues Arg-86 and 124–126; that span reads GTR.

The protein belongs to the RNase PH family. In terms of assembly, homohexameric ring arranged as a trimer of dimers.

It catalyses the reaction tRNA(n+1) + phosphate = tRNA(n) + a ribonucleoside 5'-diphosphate. Phosphorolytic 3'-5' exoribonuclease that plays an important role in tRNA 3'-end maturation. Removes nucleotide residues following the 3'-CCA terminus of tRNAs; can also add nucleotides to the ends of RNA molecules by using nucleoside diphosphates as substrates, but this may not be physiologically important. Probably plays a role in initiation of 16S rRNA degradation (leading to ribosome degradation) during starvation. The polypeptide is Ribonuclease PH (Rickettsia bellii (strain OSU 85-389)).